The sequence spans 405 residues: Arginine biosynthesis bifunctional protein ArgJ (405 aa).

The span at 1-18 (MTSADKNNPDTSTAQGSS) shows a compositional bias: polar residues. Residues 1 to 21 (MTSADKNNPDTSTAQGSSADL) are disordered. 6 residues coordinate substrate: Thr-167, Lys-189, Thr-200, Glu-281, Asn-400, and Thr-405. Thr-200 acts as the Nucleophile in catalysis.

It belongs to the ArgJ family. As to quaternary structure, heterotetramer of two alpha and two beta chains.

It localises to the cytoplasm. It carries out the reaction N(2)-acetyl-L-ornithine + L-glutamate = N-acetyl-L-glutamate + L-ornithine. The catalysed reaction is L-glutamate + acetyl-CoA = N-acetyl-L-glutamate + CoA + H(+). Its pathway is amino-acid biosynthesis; L-arginine biosynthesis; L-ornithine and N-acetyl-L-glutamate from L-glutamate and N(2)-acetyl-L-ornithine (cyclic): step 1/1. The protein operates within amino-acid biosynthesis; L-arginine biosynthesis; N(2)-acetyl-L-ornithine from L-glutamate: step 1/4. In terms of biological role, catalyzes two activities which are involved in the cyclic version of arginine biosynthesis: the synthesis of N-acetylglutamate from glutamate and acetyl-CoA as the acetyl donor, and of ornithine by transacetylation between N(2)-acetylornithine and glutamate. The chain is Arginine biosynthesis bifunctional protein ArgJ from Corynebacterium jeikeium (strain K411).